We begin with the raw amino-acid sequence, 817 residues long: B lymphocyte-induced maturation protein 1 homolog (817 aa).

Positions 1–62 are disordered; the sequence is MGQGSGDDGV…PAGVSASGAR (62 aa). The span at 15–61 shows a compositional bias: low complexity; sequence FSSAAAAAHSPPHSPLSVGVSSASSATSSSSTPPSSTSPAGVSASGA. Residues 103–241 form the SET domain; it reads MNLILKSSSK…ANTELSFWFS (139 aa). 4 consecutive C2H2-type zinc fingers follow at residues 508 to 530, 536 to 558, 564 to 586, and 592 to 614; these read YACK…VRTH, FKCE…HLVH, HRCD…LRLH, and YTCD…KRLH. The segment at 620 to 642 adopts a C2H2-type 5; degenerate zinc-finger fold; the sequence is YSCGTCGKKYISPSGLRTHWKTT. Positions 709–817 are disordered; it reads LLGQGPSGMQ…LPSLGLPHYP (109 aa). Residues 779–794 are compositionally biased toward low complexity; it reads QGGPSSGSGQQQHPQH.

In terms of assembly, interacts with dre-1; the interaction targets blmp-1 for proteasomal degradation. Interacts with ldb-1 and ham-3. In terms of processing, ubiquitinated by the SCF(dre-1) complex, leading to its degradation by the proteasome. In terms of tissue distribution, expressed in hypodermal, vulval, intestinal and distal tip cells.

The protein localises to the nucleus. It is found in the cytoplasm. Transcription factor which binds to enhancer elements in the promoter region of genes. Regulates the expression of the transcription factor bed-3 to control vulval development. Promotes terminal differentiation in the hypodermis and is involved in regulation of gonadal outgrowth and entry into the dauer stage. Regulates the timing of dorsalward migration of the distal tip cells of the hermaphrodite gonad by inhibiting precocious unc-5 and lin-29 expression which in turn prevents early dorsalward turning. Plays a role in male tail tip morphogenesis. The chain is B lymphocyte-induced maturation protein 1 homolog from Caenorhabditis elegans.